Reading from the N-terminus, the 536-residue chain is Testis-specific protein 10-interacting protein (536 aa).

Disordered regions lie at residues 1-94 (MLNT…LFSS), 185-234 (SQGL…PGQG), and 246-305 (MEEE…FKGP). A compositionally biased stretch (low complexity) spans 48–64 (SGDSLQSQSCQQQRSYS). Over residues 71–83 (KERKPRRRNKKGR) the composition is skewed to basic residues. Residues 375–451 (QAWEQQQLKE…LQGIQHRVQA (77 aa)) adopt a coiled-coil conformation. A disordered region spans residues 491–536 (GNAEGIPRKHRSYRSFGVEMESSPQSPPKTEPTSSQPGRHPSPTLD).

This Rattus norvegicus (Rat) protein is Testis-specific protein 10-interacting protein (Tsga10ip).